A 121-amino-acid polypeptide reads, in one-letter code: NAD(P)H-quinone oxidoreductase subunit M (121 aa).

Belongs to the complex I NdhM subunit family. As to quaternary structure, NDH-1 can be composed of about 15 different subunits; different subcomplexes with different compositions have been identified which probably have different functions.

It is found in the cellular thylakoid membrane. The catalysed reaction is a plastoquinone + NADH + (n+1) H(+)(in) = a plastoquinol + NAD(+) + n H(+)(out). It carries out the reaction a plastoquinone + NADPH + (n+1) H(+)(in) = a plastoquinol + NADP(+) + n H(+)(out). Its function is as follows. NDH-1 shuttles electrons from an unknown electron donor, via FMN and iron-sulfur (Fe-S) centers, to quinones in the respiratory and/or the photosynthetic chain. The immediate electron acceptor for the enzyme in this species is believed to be plastoquinone. Couples the redox reaction to proton translocation, and thus conserves the redox energy in a proton gradient. Cyanobacterial NDH-1 also plays a role in inorganic carbon-concentration. This is NAD(P)H-quinone oxidoreductase subunit M from Nostoc punctiforme (strain ATCC 29133 / PCC 73102).